The primary structure comprises 54 residues: Potassium channel toxin alpha-KTx 14.3 (54 aa).

The N-terminal stretch at 1–23 is a signal peptide; the sequence is MKIFFAILLILAVCSMAIWTVNG.

This sequence belongs to the short scorpion toxin superfamily. Potassium channel inhibitor family. Alpha-KTx 14 subfamily. In terms of processing, contains 3 disulfide bridges. In terms of tissue distribution, expressed by the venom gland.

The protein localises to the secreted. Its function is as follows. Potential blocker of potassium channels. The sequence is that of Potassium channel toxin alpha-KTx 14.3 from Olivierus martensii (Manchurian scorpion).